Here is a 607-residue protein sequence, read N- to C-terminus: Proteasome-associated ATPase (607 aa).

Residues 1–17 are compositionally biased toward basic and acidic residues; it reads MTESDRHDTPKGDRRIS. Positions 1-65 are disordered; sequence MTESDRHDTP…GRPAADNKEL (65 aa). Residues 59–102 are a coiled coil; it reads AADNKELQERVDNLTARNAKLLDTLKDARQQLVALREEVDRLGQ. 294–299 contacts ATP; it reads GCGKTL. Positions 606–607 are docks into pockets in the proteasome alpha-ring; the sequence is YL.

This sequence belongs to the AAA ATPase family. In terms of assembly, homohexamer. Assembles into a hexameric ring structure that caps the 20S proteasome core. Strongly interacts with the prokaryotic ubiquitin-like protein Pup through a hydrophobic interface; the interacting region of ARC lies in its N-terminal coiled-coil domain. There is one Pup binding site per ARC hexamer ring. Upon ATP-binding, the C-terminus of ARC interacts with the alpha-rings of the proteasome core, possibly by binding to the intersubunit pockets.

It participates in protein degradation; proteasomal Pup-dependent pathway. Functionally, ATPase which is responsible for recognizing, binding, unfolding and translocation of pupylated proteins into the bacterial 20S proteasome core particle. May be essential for opening the gate of the 20S proteasome via an interaction with its C-terminus, thereby allowing substrate entry and access to the site of proteolysis. Thus, the C-termini of the proteasomal ATPase may function like a 'key in a lock' to induce gate opening and therefore regulate proteolysis. The protein is Proteasome-associated ATPase of Gordonia bronchialis (strain ATCC 25592 / DSM 43247 / BCRC 13721 / JCM 3198 / KCTC 3076 / NBRC 16047 / NCTC 10667) (Rhodococcus bronchialis).